We begin with the raw amino-acid sequence, 386 residues long: Phosphoglycerate kinase (386 aa).

Substrate-binding positions include 21-23, R36, 59-62, R112, and R145; these read DLN and HLGR. ATP is bound by residues K196, E313, and 339 to 342; that span reads GGDT.

This sequence belongs to the phosphoglycerate kinase family. Monomer.

It localises to the cytoplasm. It carries out the reaction (2R)-3-phosphoglycerate + ATP = (2R)-3-phospho-glyceroyl phosphate + ADP. The protein operates within carbohydrate degradation; glycolysis; pyruvate from D-glyceraldehyde 3-phosphate: step 2/5. This chain is Phosphoglycerate kinase, found in Haemophilus influenzae (strain PittEE).